The chain runs to 137 residues: Peptide methionine sulfoxide reductase MsrB (137 aa).

In terms of domain architecture, MsrB spans 7–129 (AEELKKKLSE…NSASLAFSDE (123 aa)). Zn(2+)-binding residues include Cys46, Cys49, Cys95, and Cys98. The active-site Nucleophile is Cys118.

Belongs to the MsrB Met sulfoxide reductase family. Zn(2+) is required as a cofactor.

The catalysed reaction is L-methionyl-[protein] + [thioredoxin]-disulfide + H2O = L-methionyl-(R)-S-oxide-[protein] + [thioredoxin]-dithiol. The chain is Peptide methionine sulfoxide reductase MsrB from Salmonella agona (strain SL483).